A 351-amino-acid polypeptide reads, in one-letter code: Alcohol dehydrogenase 2 (351 aa).

The Zn(2+) site is built by cysteine 47, histidine 70, cysteine 101, cysteine 104, cysteine 107, cysteine 115, and cysteine 157. NAD(+)-binding positions include 181–187, aspartate 205, lysine 209, 271–273, and arginine 343; these read GAGGGLG and VGL.

It belongs to the zinc-containing alcohol dehydrogenase family. Homotetramer. Requires Zn(2+) as cofactor.

The catalysed reaction is a primary alcohol + NAD(+) = an aldehyde + NADH + H(+). It catalyses the reaction a secondary alcohol + NAD(+) = a ketone + NADH + H(+). The polypeptide is Alcohol dehydrogenase 2 (sodh-2) (Caenorhabditis elegans).